The following is a 341-amino-acid chain: UDP-3-O-acylglucosamine N-acyltransferase (341 aa).

Histidine 241 (proton acceptor) is an active-site residue.

It belongs to the transferase hexapeptide repeat family. LpxD subfamily. Homotrimer.

It catalyses the reaction a UDP-3-O-[(3R)-3-hydroxyacyl]-alpha-D-glucosamine + a (3R)-hydroxyacyl-[ACP] = a UDP-2-N,3-O-bis[(3R)-3-hydroxyacyl]-alpha-D-glucosamine + holo-[ACP] + H(+). Its pathway is bacterial outer membrane biogenesis; LPS lipid A biosynthesis. Its function is as follows. Catalyzes the N-acylation of UDP-3-O-acylglucosamine using 3-hydroxyacyl-ACP as the acyl donor. Is involved in the biosynthesis of lipid A, a phosphorylated glycolipid that anchors the lipopolysaccharide to the outer membrane of the cell. The sequence is that of UDP-3-O-acylglucosamine N-acyltransferase from Histophilus somni (strain 129Pt) (Haemophilus somnus).